Consider the following 340-residue polypeptide: tRNA N6-adenosine threonylcarbamoyltransferase (340 aa).

Fe cation contacts are provided by His111 and His115. Residues 134–138 (LVSGG), Asp167, Gly180, and Asn276 each bind substrate. Asp304 provides a ligand contact to Fe cation.

Belongs to the KAE1 / TsaD family. Fe(2+) is required as a cofactor.

It is found in the cytoplasm. It catalyses the reaction L-threonylcarbamoyladenylate + adenosine(37) in tRNA = N(6)-L-threonylcarbamoyladenosine(37) in tRNA + AMP + H(+). Its function is as follows. Required for the formation of a threonylcarbamoyl group on adenosine at position 37 (t(6)A37) in tRNAs that read codons beginning with adenine. Is involved in the transfer of the threonylcarbamoyl moiety of threonylcarbamoyl-AMP (TC-AMP) to the N6 group of A37, together with TsaE and TsaB. TsaD likely plays a direct catalytic role in this reaction. This is tRNA N6-adenosine threonylcarbamoyltransferase from Helicobacter pylori (strain J99 / ATCC 700824) (Campylobacter pylori J99).